Consider the following 165-residue polypeptide: Phosphopantetheine adenylyltransferase (165 aa).

A substrate-binding site is contributed by S11. Residues 11-12 (SF) and H19 contribute to the ATP site. Substrate is bound by residues K43, T76, and R90. Residues 91-93 (GIR), E101, and 126-132 (FSFISSS) contribute to the ATP site.

It belongs to the bacterial CoaD family. As to quaternary structure, homohexamer. The cofactor is Mg(2+).

It is found in the cytoplasm. The enzyme catalyses (R)-4'-phosphopantetheine + ATP + H(+) = 3'-dephospho-CoA + diphosphate. It functions in the pathway cofactor biosynthesis; coenzyme A biosynthesis; CoA from (R)-pantothenate: step 4/5. Its function is as follows. Reversibly transfers an adenylyl group from ATP to 4'-phosphopantetheine, yielding dephospho-CoA (dPCoA) and pyrophosphate. The protein is Phosphopantetheine adenylyltransferase of Latilactobacillus sakei subsp. sakei (strain 23K) (Lactobacillus sakei subsp. sakei).